The chain runs to 442 residues: NALCN channel auxiliary factor 2 (442 aa).

Residues 42 to 62 (LASLLFFTVLLSNHLWLVSAG) form a helical membrane-spanning segment. Asn77, Asn100, Asn171, Asn279, and Asn354 each carry an N-linked (GlcNAc...) asparagine glycan. The helical transmembrane segment at 406-426 (CVLVLMLLHTMASFSVVQNGV) threads the bilayer.

Belongs to the NALF family.

The protein resides in the membrane. Functionally, probable component of the NALCN channel complex, a channel that regulates the resting membrane potential and controls neuronal excitability. The sequence is that of NALCN channel auxiliary factor 2 (nalf2) from Xenopus tropicalis (Western clawed frog).